A 379-amino-acid polypeptide reads, in one-letter code: Homoserine O-succinyltransferase (379 aa).

The AB hydrolase-1 domain occupies 51-360 (NAVLICHALS…DAPQGHDAFL (310 aa)). The Nucleophile role is filled by Ser157. Residue Arg227 participates in substrate binding. Catalysis depends on residues Asp323 and His356. Asp357 is a binding site for substrate.

This sequence belongs to the AB hydrolase superfamily. MetX family. Homodimer.

Its subcellular location is the cytoplasm. It carries out the reaction L-homoserine + succinyl-CoA = O-succinyl-L-homoserine + CoA. It participates in amino-acid biosynthesis; L-methionine biosynthesis via de novo pathway; O-succinyl-L-homoserine from L-homoserine: step 1/1. Its function is as follows. Transfers a succinyl group from succinyl-CoA to L-homoserine, forming succinyl-L-homoserine. In Pseudomonas fluorescens (strain Pf0-1), this protein is Homoserine O-succinyltransferase.